Reading from the N-terminus, the 1468-residue chain is DNA polymerase III PolC-type (1468 aa).

The interval 197–217 is disordered; that stretch reads QKSLEDSAPPSEEVTPTQNYD. The 157-residue stretch at 430 to 586 folds into the Exonuclease domain; it reads YVVFDVETTG…YDAEATGRLL (157 aa).

It belongs to the DNA polymerase type-C family. PolC subfamily.

It is found in the cytoplasm. The enzyme catalyses DNA(n) + a 2'-deoxyribonucleoside 5'-triphosphate = DNA(n+1) + diphosphate. Required for replicative DNA synthesis. This DNA polymerase also exhibits 3' to 5' exonuclease activity. In Streptococcus agalactiae serotype III (strain NEM316), this protein is DNA polymerase III PolC-type.